A 116-amino-acid chain; its full sequence is NADH-ubiquinone oxidoreductase chain 3 (116 aa).

3 helical membrane-spanning segments follow: residues 3-23, 56-76, and 87-107; these read LISTVILIASALSLILILVSF, FFLIAILFLLFDLEIALLLPL, and LTFMWATSVLALLTLGLIYEW.

The protein belongs to the complex I subunit 3 family.

Its subcellular location is the mitochondrion membrane. The catalysed reaction is a ubiquinone + NADH + 5 H(+)(in) = a ubiquinol + NAD(+) + 4 H(+)(out). Core subunit of the mitochondrial membrane respiratory chain NADH dehydrogenase (Complex I) that is believed to belong to the minimal assembly required for catalysis. Complex I functions in the transfer of electrons from NADH to the respiratory chain. The immediate electron acceptor for the enzyme is believed to be ubiquinone. The sequence is that of NADH-ubiquinone oxidoreductase chain 3 (MT-ND3) from Gadus morhua (Atlantic cod).